We begin with the raw amino-acid sequence, 158 residues long: C-type lection lectoxin-Enh3 (158 aa).

Positions 1-23 (MGQFTVVSLGLLAMFLSLSGAKG) are cleaved as a signal peptide. 3 disulfide bridges follow: C26–C37, C54–C154, and C129–C146. The 123-residue stretch at 33-155 (RNGVCNKLFP…CASLHPFICQ (123 aa)) folds into the C-type lectin domain. The short motif at 119 to 121 (EPN) is the Mannose-binding element. Positions 127, 142, and 143 each coordinate Ca(2+).

It belongs to the true venom lectin family. As to expression, expressed by the venom gland.

It localises to the secreted. Mannose-binding lectin which recognizes specific carbohydrate structures and agglutinates a variety of animal cells by binding to cell-surface glycoproteins and glycolipids. May be a calcium-dependent lectin. The polypeptide is C-type lection lectoxin-Enh3 (Pseudoferania polylepis (Macleay's water snake)).